The sequence spans 513 residues: Protein CYCLOPS (513 aa).

The disordered stretch occupies residues 327–435 (QIHGGTASGE…ERSRKMAEAK (109 aa)). The segment covering 334–347 (SGEPSQSESSAAAP) has biased composition (low complexity). Over residues 359-381 (PSNSSQTLCDSSWKQVGESTQNR) the composition is skewed to polar residues. Basic and acidic residues predominate over residues 384 to 396 (GVREQIMDNLKDD). 2 consecutive short sequence motifs (nuclear localization signal) follow at residues 397–401 (RKRKR) and 421–424 (KKRR). A coiled-coil region spans residues 447–513 (MQAVMKRCEN…ERLLSETGKI (67 aa)).

It belongs to the CYCLOPS family.

Its subcellular location is the nucleus. In terms of biological role, involved symbiotic signaling. Required for root infection by symbiotic rhizobia, infection thread (IT) formation, and nodule development. Required for symbiosome formation (i.e. the release of the bacteria from the ITs) and subsequent symbiosome development. Involved in arbuscular mycorrhizal (AM) symbiosis. This chain is Protein CYCLOPS, found in Pisum sativum (Garden pea).